Consider the following 125-residue polypeptide: Small ribosomal subunit protein uS13 (125 aa).

Residues 92 to 125 (RHRRGLPVRGQRTRTNARTRKGKKKTVGAQAKKK) are disordered.

This sequence belongs to the universal ribosomal protein uS13 family. As to quaternary structure, part of the 30S ribosomal subunit. Forms a loose heterodimer with protein S19. Forms two bridges to the 50S subunit in the 70S ribosome.

Its function is as follows. Located at the top of the head of the 30S subunit, it contacts several helices of the 16S rRNA. In the 70S ribosome it contacts the 23S rRNA (bridge B1a) and protein L5 of the 50S subunit (bridge B1b), connecting the 2 subunits; these bridges are implicated in subunit movement. Contacts the tRNAs in the A and P-sites. The sequence is that of Small ribosomal subunit protein uS13 from Akkermansia muciniphila (strain ATCC BAA-835 / DSM 22959 / JCM 33894 / BCRC 81048 / CCUG 64013 / CIP 107961 / Muc).